The sequence spans 119 residues: Large ribosomal subunit protein uL18 (119 aa).

Belongs to the universal ribosomal protein uL18 family. As to quaternary structure, part of the 50S ribosomal subunit; part of the 5S rRNA/L5/L18/L25 subcomplex. Contacts the 5S and 23S rRNAs.

Functionally, this is one of the proteins that bind and probably mediate the attachment of the 5S RNA into the large ribosomal subunit, where it forms part of the central protuberance. The protein is Large ribosomal subunit protein uL18 of Helicobacter pylori (strain HPAG1).